A 416-amino-acid chain; its full sequence is Serine hydroxymethyltransferase (416 aa).

(6S)-5,6,7,8-tetrahydrofolate-binding positions include Leu-118 and 122 to 124 (GHL). Lys-226 is subject to N6-(pyridoxal phosphate)lysine. (6S)-5,6,7,8-tetrahydrofolate contacts are provided by residues Glu-242 and 350–352 (SPF).

Belongs to the SHMT family. Homodimer. Pyridoxal 5'-phosphate serves as cofactor.

Its subcellular location is the cytoplasm. It catalyses the reaction (6R)-5,10-methylene-5,6,7,8-tetrahydrofolate + glycine + H2O = (6S)-5,6,7,8-tetrahydrofolate + L-serine. Its pathway is one-carbon metabolism; tetrahydrofolate interconversion. The protein operates within amino-acid biosynthesis; glycine biosynthesis; glycine from L-serine: step 1/1. In terms of biological role, catalyzes the reversible interconversion of serine and glycine with tetrahydrofolate (THF) serving as the one-carbon carrier. This reaction serves as the major source of one-carbon groups required for the biosynthesis of purines, thymidylate, methionine, and other important biomolecules. Also exhibits THF-independent aldolase activity toward beta-hydroxyamino acids, producing glycine and aldehydes, via a retro-aldol mechanism. This is Serine hydroxymethyltransferase from Helicobacter pylori (strain ATCC 700392 / 26695) (Campylobacter pylori).